Reading from the N-terminus, the 271-residue chain is Formamidopyrimidine-DNA glycosylase (271 aa).

Catalysis depends on proline 2, which acts as the Schiff-base intermediate with DNA. The active-site Proton donor is the glutamate 3. Lysine 58 (proton donor; for beta-elimination activity) is an active-site residue. Residues histidine 91, arginine 110, and arginine 152 each coordinate DNA. The segment at 237-271 (SVYGRNDAPCPGCGAPIRRSRQGGRSTYFCDRCQH) adopts an FPG-type zinc-finger fold. Residue arginine 261 is the Proton donor; for delta-elimination activity of the active site.

This sequence belongs to the FPG family. In terms of assembly, monomer. Zn(2+) is required as a cofactor.

The catalysed reaction is Hydrolysis of DNA containing ring-opened 7-methylguanine residues, releasing 2,6-diamino-4-hydroxy-5-(N-methyl)formamidopyrimidine.. The enzyme catalyses 2'-deoxyribonucleotide-(2'-deoxyribose 5'-phosphate)-2'-deoxyribonucleotide-DNA = a 3'-end 2'-deoxyribonucleotide-(2,3-dehydro-2,3-deoxyribose 5'-phosphate)-DNA + a 5'-end 5'-phospho-2'-deoxyribonucleoside-DNA + H(+). In terms of biological role, involved in base excision repair of DNA damaged by oxidation or by mutagenic agents. Acts as a DNA glycosylase that recognizes and removes damaged bases. Has a preference for oxidized purines, such as 7,8-dihydro-8-oxoguanine (8-oxoG). Has AP (apurinic/apyrimidinic) lyase activity and introduces nicks in the DNA strand. Cleaves the DNA backbone by beta-delta elimination to generate a single-strand break at the site of the removed base with both 3'- and 5'-phosphates. In Geotalea uraniireducens (strain Rf4) (Geobacter uraniireducens), this protein is Formamidopyrimidine-DNA glycosylase.